Here is a 160-residue protein sequence, read N- to C-terminus: Putative tRNA (cytidine(34)-2'-O)-methyltransferase (160 aa).

Isoleucine 82, glycine 107, leucine 128, and serine 136 together coordinate S-adenosyl-L-methionine.

Belongs to the class IV-like SAM-binding methyltransferase superfamily. RNA methyltransferase TrmH family. TrmL subfamily.

The protein localises to the cytoplasm. It catalyses the reaction cytidine(34) in tRNA + S-adenosyl-L-methionine = 2'-O-methylcytidine(34) in tRNA + S-adenosyl-L-homocysteine + H(+). The enzyme catalyses 5-carboxymethylaminomethyluridine(34) in tRNA(Leu) + S-adenosyl-L-methionine = 5-carboxymethylaminomethyl-2'-O-methyluridine(34) in tRNA(Leu) + S-adenosyl-L-homocysteine + H(+). Functionally, could methylate the ribose at the nucleotide 34 wobble position in tRNA. The protein is Putative tRNA (cytidine(34)-2'-O)-methyltransferase (cspR) of Bacillus subtilis (strain 168).